A 493-amino-acid polypeptide reads, in one-letter code: Gamma-aminobutyric acid receptor subunit alpha-3 (493 aa).

The signal sequence occupies residues 1–28 (MITTQMWHFYVTRVGLLLLISILPGTTG). Positions 27-54 (TGQGESRRQEPGDFVKQDIGGLSPKHAP) are disordered. Over 29-276 (QGESRRQEPG…THFHLKRKIG (248 aa)) the chain is Extracellular. Over residues 31-42 (ESRRQEPGDFVK) the composition is skewed to basic and acidic residues. The N-linked (GlcNAc...) asparagine glycan is linked to N63. Position 119 (R119) interacts with 4-aminobutanoate. 2 N-linked (GlcNAc...) asparagine glycosylation sites follow: N163 and N176. T182 is a 4-aminobutanoate binding site. C191 and C205 are oxidised to a cystine. N228 is a glycosylation site (N-linked (GlcNAc...) asparagine). The next 3 helical transmembrane spans lie at 277-298 (YFVI…VSFW), 304-325 (VPAR…SISA), and 338-359 (MDWF…FATV). Topologically, residues 360–458 (NYFTKRSWAW…TYNSVSKVDK (99 aa)) are cytoplasmic. The residue at position 427 (S427) is a Phosphoserine. A Phosphothreonine modification is found at T428. S434 and S443 each carry phosphoserine. The chain crosses the membrane as a helical span at residues 459 to 480 (ISRIIFPVLFAIFNLVYWATYV).

This sequence belongs to the ligand-gated ion channel (TC 1.A.9) family. Gamma-aminobutyric acid receptor (TC 1.A.9.5) subfamily. GABRA3 sub-subfamily. As to quaternary structure, heteropentamer, formed by a combination of alpha (GABRA1-6), beta (GABRB1-3), gamma (GABRG1-3), delta (GABRD), epsilon (GABRE), rho (GABRR1-3), pi (GABRP) and theta (GABRQ) chains, each subunit exhibiting distinct physiological and pharmacological properties. Binds UBQLN1. Interacts with GPHN. As to expression, expressed in most brain regions. Expressed in lungs, in alveolar epithelium.

It is found in the postsynaptic cell membrane. Its subcellular location is the cell membrane. The catalysed reaction is chloride(in) = chloride(out). Functionally, alpha subunit of the heteropentameric ligand-gated chloride channel gated by gamma-aminobutyric acid (GABA), a major inhibitory neurotransmitter in the brain. GABA-gated chloride channels, also named GABA(A) receptors (GABAAR), consist of five subunits arranged around a central pore and contain GABA active binding site(s) located at the alpha and beta subunit interface(s). When activated by GABA, GABAARs selectively allow the flow of chloride anions across the cell membrane down their electrochemical gradient. Chloride influx into the postsynaptic neuron following GABAAR opening decreases the neuron ability to generate a new action potential, thereby reducing nerve transmission. This is Gamma-aminobutyric acid receptor subunit alpha-3 from Rattus norvegicus (Rat).